We begin with the raw amino-acid sequence, 209 residues long: Protein GrpE (209 aa).

Residues 1–13 are compositionally biased toward polar residues; sequence MSNDSSKAKQNQV. Residues 1-27 form a disordered region; sequence MSNDSSKAKQNQVDEAVEGEIITDNEN. Positions 15–27 are enriched in acidic residues; that stretch reads EAVEGEIITDNEN.

The protein belongs to the GrpE family. As to quaternary structure, homodimer.

It localises to the cytoplasm. In terms of biological role, participates actively in the response to hyperosmotic and heat shock by preventing the aggregation of stress-denatured proteins, in association with DnaK and GrpE. It is the nucleotide exchange factor for DnaK and may function as a thermosensor. Unfolded proteins bind initially to DnaJ; upon interaction with the DnaJ-bound protein, DnaK hydrolyzes its bound ATP, resulting in the formation of a stable complex. GrpE releases ADP from DnaK; ATP binding to DnaK triggers the release of the substrate protein, thus completing the reaction cycle. Several rounds of ATP-dependent interactions between DnaJ, DnaK and GrpE are required for fully efficient folding. The sequence is that of Protein GrpE from Shewanella sediminis (strain HAW-EB3).